The chain runs to 275 residues: Elongation factor Ts (275 aa).

K36 is covalently cross-linked (Isoglutamyl lysine isopeptide (Lys-Gln) (interchain with Q-Cter in protein Pup)). An involved in Mg(2+) ion dislocation from EF-Tu region spans residues 76-79 (TDFV).

Belongs to the EF-Ts family.

It is found in the cytoplasm. Associates with the EF-Tu.GDP complex and induces the exchange of GDP to GTP. It remains bound to the aminoacyl-tRNA.EF-Tu.GTP complex up to the GTP hydrolysis stage on the ribosome. This chain is Elongation factor Ts, found in Mycolicibacterium smegmatis (strain ATCC 700084 / mc(2)155) (Mycobacterium smegmatis).